A 264-amino-acid polypeptide reads, in one-letter code: MNQVTESAVQFDVVTLFPEMFRALTDWGITSRAVKQERFGLRTWNPRDFTTDNYRTVDDRPYGGGPGMVMLAKPLEAAIGAAKAAQAEQGVASTRVVMMSPQGAPFTHERAVRMAQEPGVIVLCGRYEAIDQRLLDRCVDEEISLGDFVLSGGELPAMAMMDAVVRLLPGVLNDAQSAVQDSFVDGLLDCPHYTRPEEYEGMRVPDVLLGGHHAEIERWRRQEALKNTLRKRPDLIVRARREKLLSRADEAWLANLAREAKNAS.

Residues Gly-125 and 145 to 150 contribute to the S-adenosyl-L-methionine site; that span reads LGDFVL.

It belongs to the RNA methyltransferase TrmD family. As to quaternary structure, homodimer.

The protein resides in the cytoplasm. It carries out the reaction guanosine(37) in tRNA + S-adenosyl-L-methionine = N(1)-methylguanosine(37) in tRNA + S-adenosyl-L-homocysteine + H(+). Specifically methylates guanosine-37 in various tRNAs. This chain is tRNA (guanine-N(1)-)-methyltransferase, found in Burkholderia ambifaria (strain ATCC BAA-244 / DSM 16087 / CCUG 44356 / LMG 19182 / AMMD) (Burkholderia cepacia (strain AMMD)).